Reading from the N-terminus, the 229-residue chain is MNILIFGPNGSGKGTQGELIQKAFGITHIESGVIFREHISKGTELGKQAKSYIDKGELVPDDITIPMILETLQIKGKSGWLLDGFPRNITQAQKLHEAMLKKGVKLDYVIEITLPREVAKSRIIGRRICKTNNNHPNNVSIDSIKPDGNNCRVCHGELIVRTDDQDEEAINKRHDIYYNTKTGTLSAAHYFKNLSDQYETHYILVNGQNTIEEIRKTLLEDLGISSEVS.

Residue 10 to 15 (GSGKGT) participates in ATP binding. The NMP stretch occupies residues 30 to 59 (ESGVIFREHISKGTELGKQAKSYIDKGELV). Residues Ser31, Arg36, 57 to 59 (ELV), 84 to 87 (GFPR), and Gln91 contribute to the AMP site. Residues 125 to 164 (GRRICKTNNNHPNNVSIDSIKPDGNNCRVCHGELIVRTDD) form an LID region. Arg126 provides a ligand contact to ATP. AMP-binding residues include Arg161 and Arg173. Asn209 serves as a coordination point for ATP.

The protein belongs to the adenylate kinase family. In terms of assembly, monomer.

It is found in the cytoplasm. It carries out the reaction AMP + ATP = 2 ADP. The protein operates within purine metabolism; AMP biosynthesis via salvage pathway; AMP from ADP: step 1/1. In terms of biological role, catalyzes the reversible transfer of the terminal phosphate group between ATP and AMP. Plays an important role in cellular energy homeostasis and in adenine nucleotide metabolism. This is Adenylate kinase from Lawsonia intracellularis (strain PHE/MN1-00).